We begin with the raw amino-acid sequence, 373 residues long: Lipoyl synthase (373 aa).

A disordered region spans residues 12–36; the sequence is HVVSNDHPSSSPLQPGVKQSGEDKI. Residues Cys81, Cys86, Cys92, Cys107, Cys111, Cys114, and Ser323 each coordinate [4Fe-4S] cluster. Residues 93 to 312 form the Radical SAM core domain; the sequence is FSHGTATFMI…EEYGMALGFS (220 aa). The disordered stretch occupies residues 346–373; sequence PAVSSTEHRERHTIASKSASKTESIRHR.

The protein belongs to the radical SAM superfamily. Lipoyl synthase family. [4Fe-4S] cluster is required as a cofactor.

It localises to the cytoplasm. It carries out the reaction [[Fe-S] cluster scaffold protein carrying a second [4Fe-4S](2+) cluster] + N(6)-octanoyl-L-lysyl-[protein] + 2 oxidized [2Fe-2S]-[ferredoxin] + 2 S-adenosyl-L-methionine + 4 H(+) = [[Fe-S] cluster scaffold protein] + N(6)-[(R)-dihydrolipoyl]-L-lysyl-[protein] + 4 Fe(3+) + 2 hydrogen sulfide + 2 5'-deoxyadenosine + 2 L-methionine + 2 reduced [2Fe-2S]-[ferredoxin]. The protein operates within protein modification; protein lipoylation via endogenous pathway; protein N(6)-(lipoyl)lysine from octanoyl-[acyl-carrier-protein]: step 2/2. In terms of biological role, catalyzes the radical-mediated insertion of two sulfur atoms into the C-6 and C-8 positions of the octanoyl moiety bound to the lipoyl domains of lipoate-dependent enzymes, thereby converting the octanoylated domains into lipoylated derivatives. This chain is Lipoyl synthase, found in Xylella fastidiosa (strain 9a5c).